The sequence spans 199 residues: Probable chemoreceptor glutamine deamidase CheD (199 aa).

This sequence belongs to the CheD family.

It catalyses the reaction L-glutaminyl-[protein] + H2O = L-glutamyl-[protein] + NH4(+). Its function is as follows. Probably deamidates glutamine residues to glutamate on methyl-accepting chemotaxis receptors (MCPs), playing an important role in chemotaxis. The sequence is that of Probable chemoreceptor glutamine deamidase CheD from Nitratidesulfovibrio vulgaris (strain ATCC 29579 / DSM 644 / CCUG 34227 / NCIMB 8303 / VKM B-1760 / Hildenborough) (Desulfovibrio vulgaris).